We begin with the raw amino-acid sequence, 444 residues long: MILDTVDEKKKGVHTRYLILLIIFIVTAVNYADRATLSIAGTEVAKELQLSAVSMGYIFSAFGWAYLLMQIPGGWLLDKFGSKKVYTYSLFFWSLFTFLQGFVDMFPLAWAGISMFFMRFMLGFSEAPSFPANARIVAAWFPTKERGTASAIFNSAQYFSLALFSPLLGWLTFAWGWEHVFTVMGVIGFVLTALWIKLIHNPTDHPRMSAEELKFISENGAVVDMDHKKPGSAAASGPKLHYIKQLLSNRMMLGVFFGQYFINTITWFFLTWFPIYLVQEKGMSILKVGLVASIPALCGFAGGVLGGVFSDYLIKRGLSLTLARKLPIVLGMLLASTIILCNYTNNTTLVVMLMALAFFGKGFGALGWPVISDTAPKEIVGLCGGVFNVFGNVASIVTPLVIGYLVSELHSFNAALVFVGCSALMAMVCYLFVVGDIKRMELQK.

At 1–11 the chain is on the cytoplasmic side; the sequence is MILDTVDEKKK. Residues 12-32 form a helical membrane-spanning segment; that stretch reads GVHTRYLILLIIFIVTAVNYA. The Periplasmic portion of the chain corresponds to 33–56; the sequence is DRATLSIAGTEVAKELQLSAVSMG. The chain crosses the membrane as a helical span at residues 57 to 77; that stretch reads YIFSAFGWAYLLMQIPGGWLL. Residues 78–89 lie on the Cytoplasmic side of the membrane; it reads DKFGSKKVYTYS. Helical transmembrane passes span 90 to 110 and 111 to 131; these read LFFWSLFTFLQGFVDMFPLAW and AGISMFFMRFMLGFSEAPSFP. At 132-157 the chain is on the cytoplasmic side; the sequence is ANARIVAAWFPTKERGTASAIFNSAQ. 2 helical membrane-spanning segments follow: residues 158-178 and 179-199; these read YFSLALFSPLLGWLTFAWGWE and HVFTVMGVIGFVLTALWIKLI. Residues 200-252 lie on the Cytoplasmic side of the membrane; that stretch reads HNPTDHPRMSAEELKFISENGAVVDMDHKKPGSAAASGPKLHYIKQLLSNRMM. A helical transmembrane segment spans residues 253-273; sequence LGVFFGQYFINTITWFFLTWF. Over 274–288 the chain is Periplasmic; sequence PIYLVQEKGMSILKV. Residues 289–309 form a helical membrane-spanning segment; sequence GLVASIPALCGFAGGVLGGVF. The Cytoplasmic segment spans residues 310–319; the sequence is SDYLIKRGLS. A helical transmembrane segment spans residues 320-340; the sequence is LTLARKLPIVLGMLLASTIIL. At 341-350 the chain is on the periplasmic side; that stretch reads CNYTNNTTLV. A helical membrane pass occupies residues 351–371; it reads VMLMALAFFGKGFGALGWPVI. At 372–385 the chain is on the cytoplasmic side; the sequence is SDTAPKEIVGLCGG. Residues 386 to 406 traverse the membrane as a helical segment; it reads VFNVFGNVASIVTPLVIGYLV. The Periplasmic segment spans residues 407–413; it reads SELHSFN. A helical membrane pass occupies residues 414-434; it reads AALVFVGCSALMAMVCYLFVV. Residues 435-444 lie on the Cytoplasmic side of the membrane; sequence GDIKRMELQK.

Belongs to the major facilitator superfamily. Phthalate permease family.

The protein localises to the cell inner membrane. It catalyses the reaction galactarate(in) + H(+)(in) = galactarate(out) + H(+)(out). The enzyme catalyses D-glucarate(in) + H(+)(in) = D-glucarate(out) + H(+)(out). The catalysed reaction is (R)-glycerate(in) + H(+)(in) = (R)-glycerate(out) + H(+)(out). Its function is as follows. Probably involved in the uptake of galactarate and/or D-glucarate. May also transport D-glycerate. The polypeptide is Probable galactarate/D-glucarate transporter GarP (Escherichia coli (strain K12)).